The primary structure comprises 323 residues: tRNA U34 carboxymethyltransferase (323 aa).

Residues lysine 91, tryptophan 105, lysine 110, glycine 130, 152–154 (DPT), 181–182 (IE), methionine 196, tyrosine 200, and arginine 315 each bind carboxy-S-adenosyl-L-methionine.

This sequence belongs to the class I-like SAM-binding methyltransferase superfamily. CmoB family. Homotetramer.

It carries out the reaction carboxy-S-adenosyl-L-methionine + 5-hydroxyuridine(34) in tRNA = 5-carboxymethoxyuridine(34) in tRNA + S-adenosyl-L-homocysteine + H(+). Its function is as follows. Catalyzes carboxymethyl transfer from carboxy-S-adenosyl-L-methionine (Cx-SAM) to 5-hydroxyuridine (ho5U) to form 5-carboxymethoxyuridine (cmo5U) at position 34 in tRNAs. The protein is tRNA U34 carboxymethyltransferase of Escherichia coli O8 (strain IAI1).